We begin with the raw amino-acid sequence, 322 residues long: Acetyl-coenzyme A carboxylase carboxyl transferase subunit alpha (322 aa).

In terms of domain architecture, CoA carboxyltransferase C-terminal spans 39 to 293 (RLASKSQQLT…KRALAESLRQ (255 aa)).

It belongs to the AccA family. Acetyl-CoA carboxylase is a heterohexamer composed of biotin carboxyl carrier protein (AccB), biotin carboxylase (AccC) and two subunits each of ACCase subunit alpha (AccA) and ACCase subunit beta (AccD).

It localises to the cytoplasm. The enzyme catalyses N(6)-carboxybiotinyl-L-lysyl-[protein] + acetyl-CoA = N(6)-biotinyl-L-lysyl-[protein] + malonyl-CoA. Its pathway is lipid metabolism; malonyl-CoA biosynthesis; malonyl-CoA from acetyl-CoA: step 1/1. In terms of biological role, component of the acetyl coenzyme A carboxylase (ACC) complex. First, biotin carboxylase catalyzes the carboxylation of biotin on its carrier protein (BCCP) and then the CO(2) group is transferred by the carboxyltransferase to acetyl-CoA to form malonyl-CoA. This Ralstonia pickettii (strain 12J) protein is Acetyl-coenzyme A carboxylase carboxyl transferase subunit alpha.